Reading from the N-terminus, the 534-residue chain is 5,6-dihydroxyindole-2-carboxylic acid oxidase (534 aa).

Positions 1-23 (MLGPATFLPLTAALLLLIPGGRA) are cleaved as a signal peptide. At 24–477 (QFPRQCVTPE…WPSRALNFTE (454 aa)) the chain is on the lumenal, melanosome side. Intrachain disulfides connect C29–C40, C41–C65, C56–C99, C101–C110, and C113–C122. N96 and N104 each carry an N-linked (GlcNAc...) asparagine glycan. N-linked (GlcNAc...) asparagine glycans are attached at residues N175 and N181. Zn(2+) contacts are provided by H192, H215, and H224. Intrachain disulfides connect C258-C261 and C290-C303. N-linked (GlcNAc...) asparagine glycans are attached at residues N304 and N350. H377 and H381 together coordinate Zn(2+). Residue N385 is glycosylated (N-linked (GlcNAc...) asparagine). H404 is a Zn(2+) binding site. A helical transmembrane segment spans residues 478 to 501 (IITIAVVAALVLVAVIFAAASCAV). At 502-534 (HRSRKDDVHQPLLGEQYPRYSEEYERDASQSAV) the chain is on the cytoplasmic side.

It belongs to the tyrosinase family. The cofactor is Cu(2+). Zn(2+) serves as cofactor.

It localises to the melanosome membrane. The catalysed reaction is 2 5,6-dihydroxyindole-2-carboxylate + O2 = 2 indole-5,6-quinone-2-carboxylate + 2 H2O. It functions in the pathway pigment biosynthesis; melanin biosynthesis. Plays a role in melanin biosynthesis. Catalyzes the oxidation of 5,6-dihydroxyindole-2-carboxylic acid (DHICA) into indole-5,6-quinone-2-carboxylic acid. May regulate or influence the type of melanin synthesized. Also to a lower extent, capable of hydroxylating tyrosine and producing melanin. This Ambystoma mexicanum (Axolotl) protein is 5,6-dihydroxyindole-2-carboxylic acid oxidase (TYRP1).